Consider the following 95-residue polypeptide: DNA-directed RNA polymerase subunit Rpo6 (95 aa).

This sequence belongs to the archaeal Rpo6/eukaryotic RPB6 RNA polymerase subunit family. Part of the RNA polymerase complex.

It is found in the cytoplasm. It catalyses the reaction RNA(n) + a ribonucleoside 5'-triphosphate = RNA(n+1) + diphosphate. In terms of biological role, DNA-dependent RNA polymerase (RNAP) catalyzes the transcription of DNA into RNA using the four ribonucleoside triphosphates as substrates. The protein is DNA-directed RNA polymerase subunit Rpo6 of Saccharolobus islandicus (strain M.16.27) (Sulfolobus islandicus).